The following is a 34-amino-acid chain: U1-poneritoxin-Na2a (34 aa).

As to expression, expressed by the venom gland.

It localises to the secreted. Functionally, may have antimicrobial properties, like most ant linear peptides. The chain is U1-poneritoxin-Na2a from Neoponera apicalis (Ant).